Here is a 93-residue protein sequence, read N- to C-terminus: NADH-ubiquinone oxidoreductase chain 4L (93 aa).

The next 3 membrane-spanning stretches (helical) occupy residues 3–23 (LTIL…GPLG), 27–47 (IIKL…LIIL), and 55–75 (ILGL…SAIG).

It belongs to the complex I subunit 4L family.

The protein resides in the mitochondrion membrane. The catalysed reaction is a ubiquinone + NADH + 5 H(+)(in) = a ubiquinol + NAD(+) + 4 H(+)(out). Functionally, core subunit of the mitochondrial membrane respiratory chain NADH dehydrogenase (Complex I) that is believed to belong to the minimal assembly required for catalysis. Complex I functions in the transfer of electrons from NADH to the respiratory chain. The immediate electron acceptor for the enzyme is believed to be ubiquinone. The polypeptide is NADH-ubiquinone oxidoreductase chain 4L (ND4L) (Wickerhamomyces canadensis (Yeast)).